A 364-amino-acid polypeptide reads, in one-letter code: E3 ubiquitin-protein ligase rnf146 (364 aa).

The tract at residues Lys18–Leu37 is disordered. The span at Gly22 to Ser34 shows a compositional bias: low complexity. Residues Cys42–Arg80 form an RING-type zinc finger. The WWE domain occupies Ser102–Arg178. 7 residues coordinate a glycoprotein: Tyr118, Arg121, Trp125, Tyr155, Gln164, Arg174, and Lys186. Disordered stretches follow at residues Ala217–Ser262 and Asn279–Val364. Composition is skewed to acidic residues over residues Gln281 to Ala295 and Thr308 to Glu322.

The protein localises to the cytoplasm. It is found in the cytosol. It localises to the nucleus. It catalyses the reaction S-ubiquitinyl-[E2 ubiquitin-conjugating enzyme]-L-cysteine + [acceptor protein]-L-lysine = [E2 ubiquitin-conjugating enzyme]-L-cysteine + N(6)-ubiquitinyl-[acceptor protein]-L-lysine.. The protein operates within protein modification; protein ubiquitination. Functionally, E3 ubiquitin-protein ligase that specifically binds poly-ADP-ribosylated proteins and mediates their ubiquitination and subsequent degradation. May regulate many important biological processes, such as cell survival and DNA damage response. Acts as an activator of the Wnt signaling pathway by mediating the ubiquitination of poly-ADP-ribosylated proteins. Neuroprotective protein. Protects against cell death induced by DNA damaging agents and rescues cells from G1 arrest. Promotes cell survival after gamma-irradiation. Facilitates DNA repair. This Danio rerio (Zebrafish) protein is E3 ubiquitin-protein ligase rnf146 (rnf146).